We begin with the raw amino-acid sequence, 918 residues long: Chaperone protein ClpC4, chloroplastic (918 aa).

The i stretch occupies residues 266-515; the sequence is LMEYGTNLTK…RLRNAQCKPS (250 aa). ATP contacts are provided by residues 311–318 and 653–660; these read GEPGVGKT and GPTGVGKS. The II stretch occupies residues 579-774; that stretch reads VTEDDVRHAI…LIVMTTNIGS (196 aa).

The protein belongs to the ClpA/ClpB family. ClpC subfamily.

It is found in the plastid. It localises to the chloroplast. Its function is as follows. Molecular chaperone that may interact with a ClpP-like protease involved in degradation of denatured proteins in the chloroplast. In Oryza sativa subsp. japonica (Rice), this protein is Chaperone protein ClpC4, chloroplastic (CPLC4).